Here is a 37-residue protein sequence, read N- to C-terminus: uncharacterized protein (37 aa).

Residues 17–37 traverse the membrane as a helical segment; it reads TFVLIVVLFILLIIVGAAFIC.

This sequence belongs to the SscA family.

The protein resides in the membrane. This is an uncharacterized protein from Bacillus subtilis (strain 168).